A 103-amino-acid chain; its full sequence is Small ribosomal subunit protein uS10 (103 aa).

This sequence belongs to the universal ribosomal protein uS10 family. As to quaternary structure, part of the 30S ribosomal subunit.

Involved in the binding of tRNA to the ribosomes. In Natranaerobius thermophilus (strain ATCC BAA-1301 / DSM 18059 / JW/NM-WN-LF), this protein is Small ribosomal subunit protein uS10.